We begin with the raw amino-acid sequence, 414 residues long: Imidazolonepropionase (414 aa).

H73 and H75 together coordinate Fe(3+). Residues H73 and H75 each coordinate Zn(2+). 4-imidazolone-5-propanoate contacts are provided by R82, Y145, and H178. Y145 contributes to the N-formimidoyl-L-glutamate binding site. Fe(3+) is bound at residue H249. H249 is a Zn(2+) binding site. Residue Q252 coordinates 4-imidazolone-5-propanoate. D324 lines the Fe(3+) pocket. D324 provides a ligand contact to Zn(2+). N-formimidoyl-L-glutamate contacts are provided by N326 and G328. A 4-imidazolone-5-propanoate-binding site is contributed by S329.

Belongs to the metallo-dependent hydrolases superfamily. HutI family. Requires Zn(2+) as cofactor. The cofactor is Fe(3+).

The protein localises to the cytoplasm. It catalyses the reaction 4-imidazolone-5-propanoate + H2O = N-formimidoyl-L-glutamate. It participates in amino-acid degradation; L-histidine degradation into L-glutamate; N-formimidoyl-L-glutamate from L-histidine: step 3/3. Functionally, catalyzes the hydrolytic cleavage of the carbon-nitrogen bond in imidazolone-5-propanoate to yield N-formimidoyl-L-glutamate. It is the third step in the universal histidine degradation pathway. This Shewanella pealeana (strain ATCC 700345 / ANG-SQ1) protein is Imidazolonepropionase.